Consider the following 163-residue polypeptide: Cyclic pyranopterin monophosphate synthase (163 aa).

Substrate contacts are provided by residues 78-80 (LCH) and 116-117 (ME). The active site involves aspartate 131.

Belongs to the MoaC family. As to quaternary structure, homohexamer; trimer of dimers.

The enzyme catalyses (8S)-3',8-cyclo-7,8-dihydroguanosine 5'-triphosphate = cyclic pyranopterin phosphate + diphosphate. The protein operates within cofactor biosynthesis; molybdopterin biosynthesis. In terms of biological role, catalyzes the conversion of (8S)-3',8-cyclo-7,8-dihydroguanosine 5'-triphosphate to cyclic pyranopterin monophosphate (cPMP). The polypeptide is Cyclic pyranopterin monophosphate synthase (Agrobacterium fabrum (strain C58 / ATCC 33970) (Agrobacterium tumefaciens (strain C58))).